The primary structure comprises 259 residues: ATP synthase subunit a (259 aa).

The next 6 helical transmembrane spans lie at 37-57 (LSITNSTIWMWLAVAVAFLFM), 101-121 (YFPAIFTLFLLVLFCNLLGLI), 131-151 (LVVTATLALSVFFFATGLAIV), 157-177 (FIGFFVPSGVPPMLLILMVPI), 203-223 (VLAIMFFFAATLPLGGLLMPA), and 232-252 (FELFIGFIQAYIFTILTCVYI).

The protein belongs to the ATPase A chain family. As to quaternary structure, F-type ATPases have 2 components, CF(1) - the catalytic core - and CF(0) - the membrane proton channel. CF(1) has five subunits: alpha(3), beta(3), gamma(1), delta(1), epsilon(1). CF(0) has three main subunits: a(1), b(2) and c(9-12). The alpha and beta chains form an alternating ring which encloses part of the gamma chain. CF(1) is attached to CF(0) by a central stalk formed by the gamma and epsilon chains, while a peripheral stalk is formed by the delta and b chains.

The protein localises to the cell inner membrane. Its function is as follows. Key component of the proton channel; it plays a direct role in the translocation of protons across the membrane. This is ATP synthase subunit a from Magnetococcus marinus (strain ATCC BAA-1437 / JCM 17883 / MC-1).